A 695-amino-acid polypeptide reads, in one-letter code: Phosphate acetyltransferase (695 aa).

Positions alanine 372–arginine 695 are phosphate acetyltransferase.

The protein in the N-terminal section; belongs to the CobB/CobQ family. It in the C-terminal section; belongs to the phosphate acetyltransferase and butyryltransferase family. As to quaternary structure, homohexamer.

It localises to the cytoplasm. The catalysed reaction is acetyl-CoA + phosphate = acetyl phosphate + CoA. The protein operates within metabolic intermediate biosynthesis; acetyl-CoA biosynthesis; acetyl-CoA from acetate: step 2/2. Its function is as follows. Involved in acetate metabolism. The chain is Phosphate acetyltransferase (pta) from Nitrosomonas europaea (strain ATCC 19718 / CIP 103999 / KCTC 2705 / NBRC 14298).